A 118-amino-acid chain; its full sequence is Evasin P1080 (118 aa).

An N-terminal signal peptide occupies residues 1-19; it reads FFQLAVFVVILFNINLLSA. 3 disulfides stabilise this stretch: Cys41-Cys60, Cys45-Cys62, and Cys56-Cys73. N-linked (GlcNAc...) asparagine glycosylation is present at Asn44. Residues Asn67 and Asn104 are each glycosylated (N-linked (GlcNAc...) asparagine).

The protein resides in the secreted. Salivary chemokine-binding protein which binds to host chemokines CXCL1, CXCL2, CXCL3, CXCL4, CXCL5, CXCL6, CXCL10, CXCL11 and CXCL13. The chain is Evasin P1080 from Ixodes ricinus (Common tick).